Reading from the N-terminus, the 376-residue chain is Enoyl-[acyl-carrier-protein] reductase, mitochondrial (376 aa).

The N-terminal 12 residues, 1–12, are a transit peptide targeting the mitochondrion; sequence MLRTLRTSQLAR. Residue Y79 is the Proton donor of the active site. NADP(+) is bound by residues N160, 183-186, 206-208, 277-280, 302-304, and K368; these read NSGV, RDR, YGGM, and YWL.

This sequence belongs to the zinc-containing alcohol dehydrogenase family. Quinone oxidoreductase subfamily. As to quaternary structure, homodimer.

Its subcellular location is the mitochondrion matrix. It catalyses the reaction a 2,3-saturated acyl-[ACP] + NADP(+) = a (2E)-enoyl-[ACP] + NADPH + H(+). Catalyzes the NADPH-dependent reduction of trans-2-enoyl thioesters in mitochondrial fatty acid synthesis (fatty acid synthesis type II). Fatty acid chain elongation in mitochondria uses acyl carrier protein (ACP) as an acyl group carrier, but the enzyme accepts both ACP and CoA thioesters as substrates in vitro. Required for respiration and the maintenance of the mitochondrial compartment. The sequence is that of Enoyl-[acyl-carrier-protein] reductase, mitochondrial (ETR1) from Yarrowia lipolytica (strain CLIB 122 / E 150) (Yeast).